The primary structure comprises 167 residues: ATP synthase subunit delta, mitochondrial (167 aa).

The transit peptide at 1-28 (MFRLSNYMLRKSQFPQGLVRAPFGIRGY) directs the protein to the mitochondrion.

Belongs to the ATPase epsilon chain family. As to quaternary structure, F-type ATPases have 2 components, CF(1) - the catalytic core - and CF(0) - the membrane proton channel. CF(1) has five subunits: alpha(3), beta(3), gamma(1), delta(1), epsilon(1). CF(0) has three main subunits: a, b and c.

Its subcellular location is the mitochondrion. The protein localises to the mitochondrion inner membrane. Mitochondrial membrane ATP synthase (F(1)F(0) ATP synthase or Complex V) produces ATP from ADP in the presence of a proton gradient across the membrane which is generated by electron transport complexes of the respiratory chain. F-type ATPases consist of two structural domains, F(1) - containing the extramembraneous catalytic core, and F(0) - containing the membrane proton channel, linked together by a central stalk and a peripheral stalk. During catalysis, ATP turnover in the catalytic domain of F(1) is coupled via a rotary mechanism of the central stalk subunits to proton translocation. Part of the complex F(1) domain and of the central stalk which is part of the complex rotary element. Rotation of the central stalk against the surrounding alpha(3)beta(3) subunits leads to hydrolysis of ATP in three separate catalytic sites on the beta subunits. This Schizosaccharomyces pombe (strain 972 / ATCC 24843) (Fission yeast) protein is ATP synthase subunit delta, mitochondrial (atp16).